We begin with the raw amino-acid sequence, 62 residues long: Small ribosomal subunit protein eS27 (62 aa).

The Zn(2+) site is built by Cys17, Cys20, Cys36, and Cys39. The segment at 17–39 (CPDCENEQTIFDRACTPVDCIVC) adopts a C4-type zinc-finger fold.

Belongs to the eukaryotic ribosomal protein eS27 family. As to quaternary structure, part of the 30S ribosomal subunit. Requires Zn(2+) as cofactor.

The protein is Small ribosomal subunit protein eS27 of Methanospirillum hungatei JF-1 (strain ATCC 27890 / DSM 864 / NBRC 100397 / JF-1).